Reading from the N-terminus, the 123-residue chain is uncharacterized protein (123 aa).

The Rhodanese domain occupies 17-117; it reads SNDNAFLVDV…NNQDKGWKQN (101 aa).

This is an uncharacterized protein from Rickettsia conorii (strain ATCC VR-613 / Malish 7).